Reading from the N-terminus, the 197-residue chain is Ribonuclease HII (197 aa).

The RNase H type-2 domain maps to G11 to L197. A divalent metal cation is bound by residues D17, E18, and D109.

Belongs to the RNase HII family. It depends on Mn(2+) as a cofactor. Mg(2+) is required as a cofactor.

Its subcellular location is the cytoplasm. It carries out the reaction Endonucleolytic cleavage to 5'-phosphomonoester.. Endonuclease that specifically degrades the RNA of RNA-DNA hybrids. The protein is Ribonuclease HII of Edwardsiella ictaluri (strain 93-146).